The following is a 122-amino-acid chain: Large ribosomal subunit protein uL14 (122 aa).

Belongs to the universal ribosomal protein uL14 family. Part of the 50S ribosomal subunit. Forms a cluster with proteins L3 and L19. In the 70S ribosome, L14 and L19 interact and together make contacts with the 16S rRNA in bridges B5 and B8.

Its function is as follows. Binds to 23S rRNA. Forms part of two intersubunit bridges in the 70S ribosome. In Frankia alni (strain DSM 45986 / CECT 9034 / ACN14a), this protein is Large ribosomal subunit protein uL14.